The sequence spans 82 residues: Sulfur carrier protein TusA (82 aa).

Catalysis depends on cysteine 19, which acts as the Cysteine persulfide intermediate.

The protein belongs to the sulfur carrier protein TusA family.

The protein resides in the cytoplasm. Its function is as follows. Sulfur carrier protein which probably makes part of a sulfur-relay system. This chain is Sulfur carrier protein TusA, found in Vibrio parahaemolyticus serotype O3:K6 (strain RIMD 2210633).